The sequence spans 531 residues: MLGAGLSNFPWLSASILFPIGSAFVIPFFPDKGDGKEVRWFALSIALITFLITVGSYINGFDINNENVQLKENISWLPDLGLTWSVGADGMSMPLILLTSFITALAVLAAWPVKFKPKLFFFLILVMDGGQIAVFAVQDMLLFFLTWELELIPVYLLLAIWGGKNRQYAATKFIIYTAGSSIFILLAALAMGFYGTEIPNFEFSHLAAQDFNQKFQIFCYVGLLIAFGVKLPIVPLHTWLPDAHGEATAPVHMLLAGILLKMGGYALLRFNAQLLPVAHAQFAPLLIVLGVVNIIYAALTSFAQRNLKRKIAYSSISHMGFVLIGIGSFSSLGTSGAMLQMVSHGLIGASLFFLVGATYDRTKTLKLDEMSGVGQKMRIMFALWTACSLASLALPGMSGFVSELMVFTGFVTDEVYTLPFRVVMASLAAIGVILTPIYLLSMLREIFFGKENPKLIEERKLIDAEPREVYIIACLLLPIIGIGLYPRLVTESYIASINNLVDRDLTAVKSAVKTNIFSGTKTNDILKAPTI.

Helical transmembrane passes span 9–29, 41–61, 93–113, 117–137, 141–161, 173–193, 217–237, 248–268, 282–302, 311–331, 337–357, 381–401, 422–442, and 469–489; these read FPWL…IPFF, FALS…INGF, MPLI…AWPV, PKLF…VFAV, LLFF…LAIW, FIIY…AMGF, IFCY…VPLH, TAPV…YALL, FAPL…LTSF, IAYS…SFSS, AMLQ…LVGA, FALW…SGFV, VVMA…LLSM, and VYII…PRLV.

The protein belongs to the complex I subunit 4 family.

It is found in the cellular thylakoid membrane. The catalysed reaction is a plastoquinone + NADH + (n+1) H(+)(in) = a plastoquinol + NAD(+) + n H(+)(out). It carries out the reaction a plastoquinone + NADPH + (n+1) H(+)(in) = a plastoquinol + NADP(+) + n H(+)(out). Functionally, NDH-1 shuttles electrons from NAD(P)H, via FMN and iron-sulfur (Fe-S) centers, to quinones in the respiratory chain. The immediate electron acceptor for the enzyme in this species is believed to be plastoquinone. Couples the redox reaction to proton translocation (for every two electrons transferred, four hydrogen ions are translocated across the cytoplasmic membrane), and thus conserves the redox energy in a proton gradient. In Prochlorococcus marinus (strain MIT 9301), this protein is NAD(P)H-quinone oxidoreductase chain 4.